We begin with the raw amino-acid sequence, 501 residues long: Phenylalanine--tRNA ligase alpha subunit (501 aa).

L-phenylalanine contacts are provided by threonine 340 and phenylalanine 423. Glutamate 425 lines the Mg(2+) pocket. Phenylalanine 448 provides a ligand contact to L-phenylalanine.

This sequence belongs to the class-II aminoacyl-tRNA synthetase family. Phe-tRNA synthetase alpha subunit type 2 subfamily. Tetramer of two alpha and two beta subunits. It depends on Mg(2+) as a cofactor.

The protein resides in the cytoplasm. It catalyses the reaction tRNA(Phe) + L-phenylalanine + ATP = L-phenylalanyl-tRNA(Phe) + AMP + diphosphate + H(+). This is Phenylalanine--tRNA ligase alpha subunit from Methanococcus maripaludis (strain C5 / ATCC BAA-1333).